The primary structure comprises 173 residues: Macro domain-containing protein in gbd 3'region (173 aa).

In terms of domain architecture, Macro spans 1-173 (MSGEHLQVVH…NYRLYRERLS (173 aa)).

Belongs to the MacroD-type family.

In Cupriavidus necator (Alcaligenes eutrophus), this protein is Macro domain-containing protein in gbd 3'region.